The chain runs to 281 residues: tRNA dimethylallyltransferase (281 aa).

Interaction with substrate tRNA stretches follow at residues 13–16 (DSAQ) and 133–137 (QRITR).

This sequence belongs to the IPP transferase family. Monomer. Mg(2+) is required as a cofactor.

It catalyses the reaction adenosine(37) in tRNA + dimethylallyl diphosphate = N(6)-dimethylallyladenosine(37) in tRNA + diphosphate. In terms of biological role, catalyzes the transfer of a dimethylallyl group onto the adenine at position 37 in tRNAs that read codons beginning with uridine, leading to the formation of N6-(dimethylallyl)adenosine (i(6)A). This chain is tRNA dimethylallyltransferase, found in Novosphingobium aromaticivorans (strain ATCC 700278 / DSM 12444 / CCUG 56034 / CIP 105152 / NBRC 16084 / F199).